Reading from the N-terminus, the 243-residue chain is Voltage-gated monoatomic cation channel TMEM109 (243 aa).

The N-terminal stretch at Met-1–Ala-33 is a signal peptide. The Lumenal portion of the chain corresponds to Gln-34 to Gln-83. Residues Val-84–Ala-104 traverse the membrane as a helical segment. Residues Gln-105 to Gly-135 lie on the Cytoplasmic side of the membrane. The helical transmembrane segment at Ala-136–Leu-156 threads the bilayer. Residues Gly-157 to Arg-185 lie on the Lumenal side of the membrane. The helical transmembrane segment at Ala-186–Ser-205 threads the bilayer. Residues Arg-206–Glu-243 lie on the Cytoplasmic side of the membrane.

Homooligomer. Interacts with CRYAB; in the cellular response to DNA damage.

The protein resides in the nucleus outer membrane. It localises to the endoplasmic reticulum membrane. The protein localises to the sarcoplasmic reticulum membrane. It carries out the reaction K(+)(in) = K(+)(out). The enzyme catalyses Ca(2+)(in) = Ca(2+)(out). Functions as a voltage-gated monoatomic cation channel permeable to both potassium and calcium. Plays a role in the cellular response to DNA damage. The protein is Voltage-gated monoatomic cation channel TMEM109 of Rattus norvegicus (Rat).